The primary structure comprises 234 residues: Octanoyltransferase (234 aa).

A BPL/LPL catalytic domain is found at 43 to 231; that stretch reads IPTRNYFLFV…HFQELFQAEL (189 aa). Residues 88 to 95, 160 to 162, and 173 to 175 contribute to the substrate site; these read RGGDITYH, AMG, and GFA. Cys-191 serves as the catalytic Acyl-thioester intermediate.

The protein belongs to the LipB family.

Its subcellular location is the cytoplasm. The enzyme catalyses octanoyl-[ACP] + L-lysyl-[protein] = N(6)-octanoyl-L-lysyl-[protein] + holo-[ACP] + H(+). Its pathway is protein modification; protein lipoylation via endogenous pathway; protein N(6)-(lipoyl)lysine from octanoyl-[acyl-carrier-protein]: step 1/2. Catalyzes the transfer of endogenously produced octanoic acid from octanoyl-acyl-carrier-protein onto the lipoyl domains of lipoate-dependent enzymes. Lipoyl-ACP can also act as a substrate although octanoyl-ACP is likely to be the physiological substrate. The chain is Octanoyltransferase from Christiangramia forsetii (strain DSM 17595 / CGMCC 1.15422 / KT0803) (Gramella forsetii).